The sequence spans 44 residues: Large ribosomal subunit protein bL34 (44 aa).

It belongs to the bacterial ribosomal protein bL34 family.

This chain is Large ribosomal subunit protein bL34, found in Neorickettsia sennetsu (strain ATCC VR-367 / Miyayama) (Ehrlichia sennetsu).